A 132-amino-acid polypeptide reads, in one-letter code: Small ribosomal subunit protein uS8 (132 aa).

It belongs to the universal ribosomal protein uS8 family. In terms of assembly, part of the 30S ribosomal subunit. Contacts proteins S5 and S12.

One of the primary rRNA binding proteins, it binds directly to 16S rRNA central domain where it helps coordinate assembly of the platform of the 30S subunit. This chain is Small ribosomal subunit protein uS8, found in Ureaplasma urealyticum serovar 10 (strain ATCC 33699 / Western).